A 521-amino-acid polypeptide reads, in one-letter code: tRNA (adenine(58)-N(1))-methyltransferase non-catalytic subunit trm6 (521 aa).

Disordered regions lie at residues 1–24 (METE…NNNN), 305–336 (IYDK…AKTI), and 452–521 (QKST…KIDE). Residues 12 to 24 (KSTTSNTNDNNNN) are compositionally biased toward low complexity. The segment covering 308–334 (KQVKEKEKEKEKDENVKDEKESGEEAK) has biased composition (basic and acidic residues). Low complexity-rich tracts occupy residues 452–476 (QKST…TKTT) and 487–502 (DATT…AATT). Basic and acidic residues predominate over residues 510-521 (SESALKKRKIDE).

It belongs to the TRM6/GCD10 family. As to quaternary structure, heterotetramer; composed of two copies of trmt6 and two copies of trmt61a.

It localises to the nucleus. Functionally, substrate-binding subunit of tRNA (adenine-N(1)-)-methyltransferase, which catalyzes the formation of N(1)-methyladenine at position 58 (m1A58) in initiator methionyl-tRNA. In Dictyostelium discoideum (Social amoeba), this protein is tRNA (adenine(58)-N(1))-methyltransferase non-catalytic subunit trm6 (trmt6).